Consider the following 146-residue polypeptide: MYPAHLLVLLAVCVSLLGAASIPPQPLNLVQFSYLIQCANHGSRATWHYTDYGCYCGKGGSGTPVDELDRCCKIHDDCYGEAEKKGCYPKMSAYDYYCGENGPYCRNIKKECQRFVCDCDVEAAKCFARAPYNDANWNIDTKKRCQ.

An N-terminal signal peptide occupies residues Met-1–Ala-19. Residues Ala-20–Leu-27 constitute a propeptide that is removed on maturation. Intrachain disulfides connect Cys-38/Cys-98, Cys-54/Cys-145, Cys-56/Cys-72, Cys-71/Cys-126, Cys-78/Cys-119, Cys-87/Cys-112, and Cys-105/Cys-117. Residues Tyr-55, Gly-57, and Gly-59 each coordinate Ca(2+). Residue His-75 is part of the active site. Ca(2+) is bound at residue Asp-76. Asp-120 is a catalytic residue.

This sequence belongs to the phospholipase A2 family. Group I subfamily. D49 sub-subfamily. Requires Ca(2+) as cofactor. As to expression, expressed by the venom gland.

The protein localises to the secreted. The enzyme catalyses a 1,2-diacyl-sn-glycero-3-phosphocholine + H2O = a 1-acyl-sn-glycero-3-phosphocholine + a fatty acid + H(+). In terms of biological role, snake venom phospholipase A2 (PLA2) that inhibits collagen-induced platelet aggregation. PLA2 catalyzes the calcium-dependent hydrolysis of the 2-acyl groups in 3-sn-phosphoglycerides. This Austrelaps superbus (Lowland copperhead snake) protein is Acidic phospholipase A2 S5-32M.